Here is a 118-residue protein sequence, read N- to C-terminus: Class II hydrophobin CRP (118 aa).

A signal peptide spans 1–22 (MQFSIIAISFLASLAMASPAKR). Positions 20 to 46 (AKRGGGGGGSGSGSGSGSGSGSGGGST) are disordered. Positions 22-45 (RGGGGGGSGSGSGSGSGSGSGGGS) are enriched in gly residues. 7 consecutive repeat copies span residues 29–30 (SG), 31–32 (SG), 33–34 (SG), 35–36 (SG), 37–38 (SG), 39–40 (SG), and 41–42 (SG). The interval 29-42 (SGSGSGSGSGSGSG) is 7 X 2 AA tandem repeats of S-G. Cystine bridges form between Cys-51-Cys-100, Cys-61-Cys-91, Cys-62-Cys-74, and Cys-101-Cys-112.

This sequence belongs to the cerato-ulmin hydrophobin family. In terms of assembly, homotetramer. Further self-assembles to form highly ordered films at water-air interfaces through intermolecular interactions.

It localises to the secreted. Its subcellular location is the cell wall. Its function is as follows. Aerial growth, conidiation, and dispersal of filamentous fungi in the environment rely upon a capability of their secreting small amphipathic proteins called hydrophobins (HPBs) with low sequence identity. Class I can self-assemble into an outermost layer of rodlet bundles on aerial cell surfaces, conferring cellular hydrophobicity that supports fungal growth, development and dispersal; whereas Class II form highly ordered films at water-air interfaces through intermolecular interactions but contribute nothing to the rodlet structure. Cryparin is a class II hydrophobin that is the most abundant protein produced by this fungus when grown in liquid culture and that plays an essential role in the fitness of this important plant pathogen by facilitating the eruption of the fungal fruiting bodies through the bark of its host tree. This chain is Class II hydrophobin CRP, found in Cryphonectria parasitica (Chestnut blight fungus).